A 238-amino-acid chain; its full sequence is 1-(5-phosphoribosyl)-5-[(5-phosphoribosylamino)methylideneamino] imidazole-4-carboxamide isomerase (238 aa).

The active-site Proton acceptor is Asp8. Asp129 (proton donor) is an active-site residue.

It belongs to the HisA/HisF family.

The protein localises to the cytoplasm. It catalyses the reaction 1-(5-phospho-beta-D-ribosyl)-5-[(5-phospho-beta-D-ribosylamino)methylideneamino]imidazole-4-carboxamide = 5-[(5-phospho-1-deoxy-D-ribulos-1-ylimino)methylamino]-1-(5-phospho-beta-D-ribosyl)imidazole-4-carboxamide. The protein operates within amino-acid biosynthesis; L-histidine biosynthesis; L-histidine from 5-phospho-alpha-D-ribose 1-diphosphate: step 4/9. In Myxococcus xanthus (strain DK1622), this protein is 1-(5-phosphoribosyl)-5-[(5-phosphoribosylamino)methylideneamino] imidazole-4-carboxamide isomerase.